The following is a 412-amino-acid chain: Aurora kinase (412 aa).

A disordered region spans residues 94 to 119 (NEKVRPSKSSHIPVKSPIRKKGHSPA). The region spanning 148 to 401 (FEIGKVLGKG…LAEVMNHPWI (254 aa)) is the Protein kinase domain. ATP-binding positions include 154 to 162 (LGKGKLGKV) and Lys177. Asp271 serves as the catalytic Proton acceptor.

The protein belongs to the protein kinase superfamily. Ser/Thr protein kinase family. Aurora subfamily.

It is found in the nucleus. The protein localises to the cytoplasm. Its subcellular location is the cytoskeleton. It localises to the spindle. The protein resides in the chromosome. It is found in the centromere. The protein localises to the kinetochore. The catalysed reaction is L-seryl-[protein] + ATP = O-phospho-L-seryl-[protein] + ADP + H(+). It carries out the reaction L-threonyl-[protein] + ATP = O-phospho-L-threonyl-[protein] + ADP + H(+). Functionally, component of the chromosomal passenger complex (CPC), a complex that acts as a key regulator of chromosome segregation and cytokinesis. Has a role in error-correction of aberrent kinetochore-microtubule attachments to ensure that sister kinetochores become bioriented and connect to opposite poles by promoting spindle assembly checkpoint signaling. This is Aurora kinase (IPL1) from Debaryomyces hansenii (strain ATCC 36239 / CBS 767 / BCRC 21394 / JCM 1990 / NBRC 0083 / IGC 2968) (Yeast).